The chain runs to 426 residues: Histidine--tRNA ligase (426 aa).

It belongs to the class-II aminoacyl-tRNA synthetase family. Homodimer.

It localises to the cytoplasm. It catalyses the reaction tRNA(His) + L-histidine + ATP = L-histidyl-tRNA(His) + AMP + diphosphate + H(+). The chain is Histidine--tRNA ligase from Streptococcus thermophilus (strain ATCC BAA-491 / LMD-9).